Reading from the N-terminus, the 245-residue chain is Adapter protein MecA (245 aa).

The protein belongs to the MecA family. Homodimer.

Its function is as follows. Enables the recognition and targeting of unfolded and aggregated proteins to the ClpC protease or to other proteins involved in proteolysis. The chain is Adapter protein MecA from Streptococcus pneumoniae serotype 19F (strain G54).